The chain runs to 460 residues: Nuclear transport factor 2 (460 aa).

In terms of domain architecture, NTF2 spans 15–131 (VGRAFVEQYY…YFVLNDVFRF (117 aa)). 3 disordered regions span residues 207–226 (EPPT…GDAP), 238–289 (KSSP…VDVE), and 361–460 (RQAV…GGSS). The 78-residue stretch at 293-370 (HSIYVRNLPF…RQAVVEEKKT (78 aa)) folds into the RRM domain. Residues 373-382 (RGGGNNGGSR) show a composition bias toward gly residues. A compositionally biased stretch (low complexity) spans 383–394 (GRYFSGRGSFRN). Gly residues-rich tracts occupy residues 399–416 (GGRG…GGEF) and 450–460 (GRGGARGGGSS).

As to quaternary structure, interacts with MBD6.

The protein resides in the cytoplasm. It is found in the nucleus. Involved in RNA-directed DNA methylation (RdDM). In Arabidopsis thaliana (Mouse-ear cress), this protein is Nuclear transport factor 2.